The following is a 159-amino-acid chain: MSKPGGHARHGRRDGIDPVLRSRARRRALQAVYAWQIAGGFAKQVIAQFAHEQAHEVADLAYFESLVEGVLSNRSELDTALTPYLDRGVEEVDAIERAVLRLAAYELLYRQDVPYRVVINEAIETAKRFGSEHGHTYVNGVLDRAAVEWRKMESGASGA.

Belongs to the NusB family.

In terms of biological role, involved in transcription antitermination. Required for transcription of ribosomal RNA (rRNA) genes. Binds specifically to the boxA antiterminator sequence of the ribosomal RNA (rrn) operons. The protein is Transcription antitermination protein NusB of Xanthomonas campestris pv. campestris (strain 8004).